Consider the following 278-residue polypeptide: Large ribosomal subunit protein uL2 (278 aa).

2 stretches are compositionally biased toward basic residues: residues 210–219 (RKRWLGKRPQ) and 252–263 (KKSRGIKTRNSK). The disordered stretch occupies residues 210–278 (RKRWLGKRPQ…LIIRHRKGNK (69 aa)).

Belongs to the universal ribosomal protein uL2 family. Part of the 50S ribosomal subunit. Forms a bridge to the 30S subunit in the 70S ribosome.

Its function is as follows. One of the primary rRNA binding proteins. Required for association of the 30S and 50S subunits to form the 70S ribosome, for tRNA binding and peptide bond formation. It has been suggested to have peptidyltransferase activity; this is somewhat controversial. Makes several contacts with the 16S rRNA in the 70S ribosome. The protein is Large ribosomal subunit protein uL2 of Lactobacillus gasseri (strain ATCC 33323 / DSM 20243 / BCRC 14619 / CIP 102991 / JCM 1131 / KCTC 3163 / NCIMB 11718 / NCTC 13722 / AM63).